Consider the following 279-residue polypeptide: Putative Delta(7)-sterol-C5(6)-desaturase 2 (279 aa).

Transmembrane regions (helical) follow at residues 48–68 and 127–147; these read LAGN…IYYL and FLCF…IYWV. Positions 134-263 constitute a Fatty acid hydroxylase domain; sequence ALYLVLVEFM…TIWMDWMFGS (130 aa). The Histidine box-1 signature appears at 148-152; the sequence is HKELH. A Histidine box-2 motif is present at residues 162–166; the sequence is HATHH. A helical membrane pass occupies residues 194 to 214; that stretch reads HVIALFIVPIHLITHLSLLFL. The short motif at 239 to 243 is the Histidine box-3 element; the sequence is HTIHH.

The protein belongs to the sterol desaturase family. Fe cation serves as cofactor.

It is found in the endoplasmic reticulum membrane. The catalysed reaction is a Delta(7)-sterol + 2 Fe(II)-[cytochrome b5] + O2 + 2 H(+) = a Delta(5),Delta(7)-sterol + 2 Fe(III)-[cytochrome b5] + 2 H2O. In Arabidopsis thaliana (Mouse-ear cress), this protein is Putative Delta(7)-sterol-C5(6)-desaturase 2 (HDF7).